Consider the following 481-residue polypeptide: Mediator of RNA polymerase II transcription subunit 3 (481 aa).

The stretch at 79–107 (QEKFQMIRSKVLGLTERLQELSNDFEELQ) forms a coiled coil. Disordered stretches follow at residues 140 to 261 (AGAS…MGTP) and 415 to 463 (NTKG…KSAY). Residues 148–203 (TPTPAAATPTTAPTPGAGTKKAAKTAPTPTATATIGTPSNNAPTPATTATTPGTQA) show a composition bias toward low complexity. The span at 204-213 (KKPRKPRQTK) shows a compositional bias: basic residues. Low complexity predominate over residues 214–248 (KQQQAAAAAAAVAQAQAQAQAQAQNQNQNNMQNKN). Polar residues predominate over residues 249–259 (ISNPGMNSNMG). Over residues 428-458 (MDQNQNQNQSQNQSQNQNQSMNMNMNNDSNN) the composition is skewed to low complexity.

It belongs to the Mediator complex subunit 3 family. In terms of assembly, component of the Mediator complex.

The protein resides in the nucleus. Component of the Mediator complex, a coactivator involved in regulated gene transcription of nearly all RNA polymerase II-dependent genes. Mediator functions as a bridge to convey information from gene-specific regulatory proteins to the basal RNA polymerase II transcription machinery. Mediator is recruited to promoters by direct interactions with regulatory proteins and serves as a scaffold for the assembly of a functional preinitiation complex with RNA polymerase II and the general transcription factors. This is Mediator of RNA polymerase II transcription subunit 3 (PGD1) from Candida glabrata (strain ATCC 2001 / BCRC 20586 / JCM 3761 / NBRC 0622 / NRRL Y-65 / CBS 138) (Yeast).